A 304-amino-acid polypeptide reads, in one-letter code: 6-dehydroglucose reductase (304 aa).

The NADP(+) site is built by W28, R29, and D56. Y61 serves as the catalytic Proton donor. D-glucose is bound by residues Y61, H133, and R134. NADP(+) is bound by residues S163, N164, Q185, S215, L217, G219, G268, S269, Q270, and R274.

Belongs to the aldo/keto reductase family.

It catalyses the reaction D-glucose + NADP(+) = 6-dehydro-D-glucose + NADPH + H(+). Part of the alkanesulfonate monooxygenase (sulfo-ASMO) pathway, a D-sulfoquinovose degradation pathway that enables the complete utilization of all carbons within sulfoquinovose (SQ) with concomitant production of inorganic sulfite. Catalyzes the NADP-dependent reduction of 6-dehydro-D-glucose to D-glucose. Can also catalyze the reversible reaction, the formation of 6-dehydro-D-glucose from D-glucose in the presence of NADP(+). The protein is 6-dehydroglucose reductase of Novosphingobium aromaticivorans (strain ATCC 700278 / DSM 12444 / CCUG 56034 / CIP 105152 / NBRC 16084 / F199).